The sequence spans 340 residues: Toxin coregulated pilus biosynthesis protein E (340 aa).

A run of 3 helical transmembrane segments spans residues 108–131, 146–161, and 312–333; these read AISS…GYSV, WPGV…FSLY, and NISL…FSLV.

It belongs to the GSP F family.

The protein resides in the cell inner membrane. Functionally, probably involved in cholera toxin receptor (GM1) interaction in order to bring the cells within close proximity of the ganglioside for efficient toxin delivery. This chain is Toxin coregulated pilus biosynthesis protein E (tcpE), found in Vibrio cholerae serotype O1 (strain ATCC 39315 / El Tor Inaba N16961).